Reading from the N-terminus, the 492-residue chain is Catalase isozyme 1 (492 aa).

Catalysis depends on residues His65 and Asn138. Position 348 (Tyr348) interacts with heme.

The protein belongs to the catalase family. In terms of assembly, homotetramer. The cofactor is heme.

The protein localises to the peroxisome. It is found in the glyoxysome. The enzyme catalyses 2 H2O2 = O2 + 2 H2O. Its function is as follows. Occurs in almost all aerobically respiring organisms and serves to protect cells from the toxic effects of hydrogen peroxide. The chain is Catalase isozyme 1 (CAT1) from Solanum tuberosum (Potato).